Consider the following 326-residue polypeptide: Nine-heme cytochrome c (326 aa).

Positions 1–30 are cleaved as a signal peptide; the sequence is MRNGTSLLLLAAIALAGAACLTAMGGTAKA. Residues His67, His70, Cys77, Cys80, His81, His82, Cys89, Cys92, His93, His111, Cys127, Cys130, His131, Cys141, Cys144, His145, Cys157, Cys160, His161, His227, His230, His248, Cys255, Cys258, His259, His260, Cys271, Cys274, His275, His294, Cys297, Cys300, His301, Cys314, Cys317, and His318 each contribute to the heme site.

Monomer. Binds 9 heme groups per subunit.

Its subcellular location is the periplasm. Its function is as follows. May form part of a transmembrane redox complex through which electrons are transferred to the cytoplasm for reduction of sulfate. The sequence is that of Nine-heme cytochrome c from Desulfovibrio desulfuricans (strain ATCC 27774 / DSM 6949 / MB).